A 183-amino-acid chain; its full sequence is Translation initiation factor IF-3 (183 aa).

The protein belongs to the IF-3 family. As to quaternary structure, monomer.

The protein resides in the cytoplasm. In terms of biological role, IF-3 binds to the 30S ribosomal subunit and shifts the equilibrium between 70S ribosomes and their 50S and 30S subunits in favor of the free subunits, thus enhancing the availability of 30S subunits on which protein synthesis initiation begins. In Serratia marcescens, this protein is Translation initiation factor IF-3.